The following is a 247-amino-acid chain: Segregation and condensation protein A (247 aa).

Belongs to the ScpA family. As to quaternary structure, component of a cohesin-like complex composed of ScpA, ScpB and the Smc homodimer, in which ScpA and ScpB bind to the head domain of Smc. The presence of the three proteins is required for the association of the complex with DNA.

Its subcellular location is the cytoplasm. Participates in chromosomal partition during cell division. May act via the formation of a condensin-like complex containing Smc and ScpB that pull DNA away from mid-cell into both cell halves. This is Segregation and condensation protein A from Bacillus cereus (strain G9842).